The chain runs to 146 residues: Leptin (146 aa).

Cys96 and Cys146 are joined by a disulfide.

It belongs to the leptin family.

The protein localises to the secreted. In terms of biological role, key player in the regulation of energy balance and body weight control. Once released into the circulation, has central and peripheral effects by binding LEPR, found in many tissues, which results in the activation of several major signaling pathways. In the hypothalamus, acts as an appetite-regulating factor that induces a decrease in food intake and an increase in energy consumption by inducing anorexinogenic factors and suppressing orexigenic neuropeptides, also regulates bone mass and secretion of hypothalamo-pituitary-adrenal hormones. In the periphery, increases basal metabolism, influences reproductive function, regulates pancreatic beta-cell function and insulin secretion, is pro-angiogenic for endothelial cell and affects innate and adaptive immunity. In the arcuate nucleus of the hypothalamus, activates by depolarization POMC neurons inducing FOS and SOCS3 expression to release anorexigenic peptides and inhibits by hyperpolarization NPY neurons inducing SOCS3 with a consequent reduction on release of orexigenic peptides. In addition to its known satiety inducing effect, has a modulatory role in nutrient absorption. In the intestine, reduces glucose absorption by enterocytes by activating PKC and leading to a sequential activation of p38, PI3K and ERK signaling pathways which exerts an inhibitory effect on glucose absorption. Acts as a growth factor on certain tissues, through the activation of different signaling pathways increases expression of genes involved in cell cycle regulation such as CCND1, via JAK2-STAT3 pathway, or VEGFA, via MAPK1/3 and PI3K-AKT1 pathways. May also play an apoptotic role via JAK2-STAT3 pathway and up-regulation of BIRC5 expression. Pro-angiogenic, has mitogenic activity on vascular endothelial cells and plays a role in matrix remodeling by regulating the expression of matrix metalloproteinases (MMPs) and tissue inhibitors of metalloproteinases (TIMPs). In innate immunity, modulates the activity and function of neutrophils by increasing chemotaxis and the secretion of oxygen radicals. Increases phagocytosis by macrophages and enhances secretion of pro-inflammatory mediators. Increases cytotoxic ability of NK cells. Plays a pro-inflammatory role, in synergy with IL1B, by inducing NOS2 which promotes the production of IL6, IL8 and Prostaglandin E2, through a signaling pathway that involves JAK2, PI3K, MAP2K1/MEK1 and MAPK14/p38. In adaptive immunity, promotes the switch of memory T-cells towards T helper-1 cell immune responses. Increases CD4(+)CD25(-) T-cell proliferation and reduces autophagy during TCR (T-cell receptor) stimulation, through MTOR signaling pathway activation and BCL2 up-regulation. The chain is Leptin (LEP) from Pan troglodytes (Chimpanzee).